The following is a 705-amino-acid chain: Choline transporter-like protein 2 (705 aa).

Topologically, residues 1 to 31 (MEDQRKYGAYGTPQKYDPTFKGPIYNRGCTD) are cytoplasmic. At T12 the chain carries Phosphothreonine. A helical transmembrane segment spans residues 32 to 52 (VLCCVLLFLAIVGYVAVGLIA). Residues 53–231 (WTHGDPRKVI…RIFEDYTVSW (179 aa)) lie on the Extracellular side of the membrane. N186 and N199 each carry an N-linked (GlcNAc...) asparagine glycan. The helical transmembrane segment at 232–252 (YWIVIGLVIAMVLSLLFIILL) threads the bilayer. At 253 to 255 (RFL) the chain is on the cytoplasmic side. The chain crosses the membrane as a helical span at residues 256–276 (AGIMVWVMIVLVILVLGYGIF). At 277 to 314 (HCYMEYARLRGEAGSDISVLDLGFQTDFRVYLHLRQTW) the chain is on the extracellular side. A helical transmembrane segment spans residues 315-335 (LAFMIILSILEVIIILLLIFL). Residues 336–363 (RKRILIAIALIKEASRAVGYVMCSLLYP) are Cytoplasmic-facing. A helical membrane pass occupies residues 364-384 (LVTFFLLCLCIAYWASTAVFL). Residues 385-455 (STSNEAVYKI…IFNAFMFFWL (71 aa)) lie on the Extracellular side of the membrane. An N-linked (GlcNAc...) asparagine glycan is attached at N414. The chain crosses the membrane as a helical span at residues 456-478 (ANFVLALGQVTLAGAFASYYWAL). Residues 479-503 (RKPDDMPAFPLFAAFGRALRYHTGS) are Cytoplasmic-facing. A helical membrane pass occupies residues 504-524 (LAFGSLILAIVQIIRVILEYL). Residues 525–562 (DQRLKAAENKFAKFLMTCLKCCFWCLEKFIKFLNRNAY) are Extracellular-facing. The helical transmembrane segment at 563 to 583 (IMIAIYGTNFCTSARNAFFLL) threads the bilayer. The Cytoplasmic portion of the chain corresponds to 584-598 (MRNIIRVAVLDKVTD). Residues 599-619 (FLFLLGKLLIVGSVGILAFFF) form a helical membrane-spanning segment. The Extracellular segment spans residues 620 to 637 (FTHRIRIVQDTAPPLNYY). Residues 638–658 (WVPILTVIVGSYLIAHGFFSV) traverse the membrane as a helical segment. Over 659 to 705 (YGMCVDTLFLCFLEDLERNNGSSERPYFMSSTLKKLLNKTNKKPVES) the chain is Cytoplasmic.

The protein belongs to the CTL (choline transporter-like) family. Interacts with COCH. N-glycosylated; contains sialic acid. Not O-glycosylated. In terms of tissue distribution, expressed at high levels in lung, colon and in supporting cells of the inner ear (at protein level). Progressively lower levels in brain, tongue, liver and kidney (at protein level). In the tongue, strongly expressed in epithelial cells and in nerves within the musculature. Within the nerves, expression observed in the perineurial cells of the nerve sheath, in the Schwann cells and myelinated nerve fibers (at protein level). In the kidney, prominent expression in glomeruli in the lining of Bowman's capsule and on the mesangial cells adjacent to the vessels within the glomerulus (at protein level). Strongly expressed on the membranes of splenocytes (at protein level).

Its subcellular location is the cell membrane. The protein resides in the mitochondrion outer membrane. It catalyses the reaction choline(out) + n H(+)(in) = choline(in) + n H(+)(out). The catalysed reaction is ethanolamine(out) + n H(+)(in) = ethanolamine(in) + n H(+)(out). In terms of biological role, choline/H+ antiporter, mainly in mitochodria. Also acts as a low-affinity ethanolamine/H+ antiporter, regulating the supply of extracellular ethanolamine (Etn) for the CDP-Etn pathway, redistribute intracellular Etn and balance the CDP-Cho and CDP-Etn arms of the Kennedy pathway. This is Choline transporter-like protein 2 (SLC44A2) from Cavia porcellus (Guinea pig).